We begin with the raw amino-acid sequence, 442 residues long: MITPKVLSGFKDRLPKDAIQKAQLLAKVSVVFQSFGFVPIETPHLEYAQTLLPDASSDIQKEIYRFKDHGDRDVALRFDLTVPLARFVSLHHQILGMPFKRYAIGNVFRGERAQKGRYREFTQCDFDFIGSESLVCDAEIIQVIIASLKALDLEDFCVSINHRKILNGICEYFGIAQVNEVLRIVDKLEKIGLNGVEEELKKECDLDSNTIKDLLEMVQIKQNDLSHAEFFEKIAYLKDYNENLKKGIQDLERLYQLLGDLQISQNLYKIDFSIARGLGYYTGIVYETTLNDMKSLGSVCSGGRYDHLTKNFSKENLQGVGASIGIDRLIVALSEMQLLDERSTQAKVLIACMHEEYFSYANRLAESLRQSGIFSEVYPEAQKIKKPFSYANHKGHEFVAVIGEEEFKSETLSLKNMHSGMQLNCLSFLKALEIIGENDEDL.

Belongs to the class-II aminoacyl-tRNA synthetase family. Homodimer.

The protein resides in the cytoplasm. The enzyme catalyses tRNA(His) + L-histidine + ATP = L-histidyl-tRNA(His) + AMP + diphosphate + H(+). The polypeptide is Histidine--tRNA ligase (hisS) (Helicobacter pylori (strain J99 / ATCC 700824) (Campylobacter pylori J99)).